Here is a 176-residue protein sequence, read N- to C-terminus: Ferritin, higher subunit (176 aa).

One can recognise a Ferritin-like diiron domain in the interval 7-156; the sequence is QNFHRDCEAA…DYITNLKRLG (150 aa). 6 residues coordinate Fe cation: E24, E58, E59, H62, E104, and Q138.

Belongs to the ferritin family. In terms of assembly, oligomer of 24 subunits. The functional molecule is roughly spherical and contains a central cavity into which the polymeric mineral iron core is deposited.

The enzyme catalyses 4 Fe(2+) + O2 + 4 H(+) = 4 Fe(3+) + 2 H2O. In terms of biological role, stores iron in a soluble, non-toxic, readily available form. Important for iron homeostasis. Has ferroxidase activity. Iron is taken up in the ferrous form and deposited as ferric hydroxides after oxidation. This chain is Ferritin, higher subunit, found in Aquarana catesbeiana (American bullfrog).